Consider the following 295-residue polypeptide: Glycine--tRNA ligase alpha subunit (295 aa).

It belongs to the class-II aminoacyl-tRNA synthetase family. As to quaternary structure, tetramer of two alpha and two beta subunits.

The protein localises to the cytoplasm. It carries out the reaction tRNA(Gly) + glycine + ATP = glycyl-tRNA(Gly) + AMP + diphosphate. The protein is Glycine--tRNA ligase alpha subunit of Bacillus licheniformis (strain ATCC 14580 / DSM 13 / JCM 2505 / CCUG 7422 / NBRC 12200 / NCIMB 9375 / NCTC 10341 / NRRL NRS-1264 / Gibson 46).